The sequence spans 1339 residues: Tuberous sclerosis 2 protein homolog (1339 aa).

Serine 1036 carries the phosphoserine modification. The region spanning 1109 to 1303 is the Rap-GAP domain; the sequence is ILANTNPSED…AERLRQLKRL (195 aa).

In terms of assembly, interacts with tsc1.

The protein resides in the cytoplasm. Its subcellular location is the nucleus. In terms of biological role, together with tsc1, required for uptake of various amino acids from the environment and for proper conjugation. Involved in induction of gene expression of permeases and genes required for meiosis upon nitrogen starvation. May act as a GTPase-activating protein (GAP) for the small GTPase rhb1. In Schizosaccharomyces pombe (strain 972 / ATCC 24843) (Fission yeast), this protein is Tuberous sclerosis 2 protein homolog (tsc2).